A 408-amino-acid polypeptide reads, in one-letter code: UPF0761 membrane protein Avin_36810 (408 aa).

A run of 6 helical transmembrane segments spans residues 33-53, 92-112, 132-152, 174-194, 209-229, and 238-258; these read YTAL…LSVV, HLTW…LMTV, FLLH…GFAL, LLKV…YVAV, LFAA…VALF, and AFAA…IVLL.

Belongs to the UPF0761 family.

Its subcellular location is the cell inner membrane. This chain is UPF0761 membrane protein Avin_36810, found in Azotobacter vinelandii (strain DJ / ATCC BAA-1303).